Here is a 635-residue protein sequence, read N- to C-terminus: Peptidyl-prolyl cis-trans isomerase PASTICCINO1 (635 aa).

A compositionally biased stretch (polar residues) spans 1–10 (MAVGDQTEQN). The interval 1-28 (MAVGDQTEQNYLPKKKKSETEDDKRRKK) is disordered. PPIase FKBP-type domains lie at 51-147 (GDQV…LDFS), 175-260 (PYEV…VHFI), and 291-383 (DSRL…LGFE). TPR repeat units lie at residues 400-433 (ADKI…FNHV), 449-482 (NMLH…KPGH), and 483-516 (VKGL…DKSS). The segment at 530-546 (KEQEAESKARKQFKGLF) is calmodulin-binding. Acidic residues predominate over residues 569-586 (EVDETKDNDDDETLEEEG). A disordered region spans residues 569–593 (EVDETKDNDDDETLEEEGATTVSTE). A helical; Anchor for type IV membrane protein transmembrane segment spans residues 609 to 629 (VMLQIGIQLGVVLIGILIFQF).

It belongs to the FKBP-type PPIase family. As to quaternary structure, interacts with calmodulin (CaM). Interacts with RPM1 and NAC089. Interacts with the elongase complex core members KCR1, PAS2 and CER10. As to expression, expressed ubiquitously.

Its subcellular location is the endoplasmic reticulum membrane. It localises to the cytoplasm. The protein localises to the nucleus. The enzyme catalyses [protein]-peptidylproline (omega=180) = [protein]-peptidylproline (omega=0). Its function is as follows. PPIases accelerate the folding of proteins. It catalyzes the cis-trans isomerization of proline imidic peptide bonds in oligopeptides. Essential protein regulating cell division, adhesion and elongation throughout the plant development and embryogenesis. Required for the spatial organization of apical meristems. Involved in the hormonal control of cell division and differentiation mediated by cytokinins and auxin. Regulates the function of NAC089 transcription factor by controlling its targeting to the nucleus upon plant cell division. Interacts with enzymes of the fatty acid elongase complex and favors the generation of very-long-chain fatty acids (VLCFAs) required for polar auxin transport and tissue patterning during plant development. The polypeptide is Peptidyl-prolyl cis-trans isomerase PASTICCINO1 (PAS1) (Arabidopsis thaliana (Mouse-ear cress)).